Here is a 164-residue protein sequence, read N- to C-terminus: Protein CURVATURE THYLAKOID 1A, chloroplastic (164 aa).

The N-terminal 62 residues, 1-62 (MAISVAASSS…LQKVELLKTR (62 aa)), are a transit peptide targeting the chloroplast. N-acetylalanine is present on A63. Residues 63-93 (ASSEETSSIDTNELITDLKEKWDGLENKSTV) lie on the Stromal side of the membrane. The helical transmembrane segment at 94–114 (LIYGGGAIVAVWLSSIVVGAI) threads the bilayer. Topologically, residues 115 to 116 (NS) are lumenal. A helical membrane pass occupies residues 117 to 137 (VPLLPKVMELVGLGYTGWFVY). Residues 138-164 (RYLLFKSSRKELAEDIESLKKKIAGSE) lie on the Stromal side of the membrane. A coiled-coil region spans residues 140–164 (LLFKSSRKELAEDIESLKKKIAGSE).

This sequence belongs to the CURT family. In terms of assembly, homo- and heterodimers and trimers.

It is found in the plastid. The protein resides in the chloroplast. It localises to the plastoglobule. Its subcellular location is the membrane. The protein localises to the chloroplast thylakoid membrane. Determines thylakoid architecture by inducing membrane curvature. The protein is Protein CURVATURE THYLAKOID 1A, chloroplastic (CURT1A) of Arabidopsis thaliana (Mouse-ear cress).